The sequence spans 343 residues: Twinfilin (343 aa).

ADF-H domains lie at 11–135 (EQLA…EGYR) and 184–312 (EATV…DELH). The segment at 319–343 (RPAFAKPKGPPNRGAKRLTRPTAED) is disordered.

This sequence belongs to the actin-binding proteins ADF family. Twinfilin subfamily. As to quaternary structure, interacts with G-actin; ADP-actin form.

Its subcellular location is the cytoplasm. The protein localises to the cytoskeleton. The protein resides in the cell cortex. In terms of biological role, actin-binding protein involved in motile and morphological processes. Inhibits actin polymerization, likely by sequestering G-actin. This Drosophila melanogaster (Fruit fly) protein is Twinfilin (twf).